The sequence spans 122 residues: Probable dihydroneopterin aldolase (122 aa).

Substrate is bound by residues glutamate 21, tyrosine 54, and 73–74 (LE). Lysine 101 (proton donor/acceptor) is an active-site residue.

The protein belongs to the DHNA family.

It carries out the reaction 7,8-dihydroneopterin = 6-hydroxymethyl-7,8-dihydropterin + glycolaldehyde. It participates in cofactor biosynthesis; tetrahydrofolate biosynthesis; 2-amino-4-hydroxy-6-hydroxymethyl-7,8-dihydropteridine diphosphate from 7,8-dihydroneopterin triphosphate: step 3/4. Catalyzes the conversion of 7,8-dihydroneopterin to 6-hydroxymethyl-7,8-dihydropterin. The polypeptide is Probable dihydroneopterin aldolase (folB) (Chlamydia muridarum (strain MoPn / Nigg)).